The following is a 446-amino-acid chain: Sterile alpha motif domain-containing protein 7 (446 aa).

Positions 94–168 (HTARTEMEMY…NLQGNPMLAA (75 aa)) are required for localization to nuclear polycomb bodies. Disordered stretches follow at residues 187 to 207 (NTGN…QAEE) and 225 to 277 (KDPD…AWDD). Polar residues predominate over residues 232-249 (PSNQKSSETNEKPTTALA). Positions 327-392 (WTVDDVHSFI…SQVSQHVGSM (66 aa)) constitute an SAM domain.

As to quaternary structure, monomer, homodimer and homooligomer. Component of a Polycomb group (PcG) multiprotein PRC1-like complex. Interacts with PHC2, NR2E3 and SAMD11. Interacts with RNF1 in a PHC2-dependent manner. As to expression, expressed in the retina (at protein level). Expressed in the retinal inner and outer nuclear layers.

The protein resides in the nucleus. The protein localises to the cytoplasm. Component of a Polycomb group (PcG) multiprotein PRC1-like complex, essential for establishing rod photoreceptor cell identity and function by silencing nonrod gene expression in developing rod photoreceptor cells. Via its association with the PRC1-like complex, promotes epigenetic repressive marks H3K27me3 and H2AK119ub marks in nonrod genes, silencing their transcription. Represses Crx-controlled photoreceptor-specific gene expression. The chain is Sterile alpha motif domain-containing protein 7 (SAMD7) from Homo sapiens (Human).